The primary structure comprises 438 residues: GTPase Der (438 aa).

EngA-type G domains are found at residues 4 to 168 (PIVA…KNEG) and 177 to 352 (IKIA…DNYC). Residues 10 to 17 (GRPNVGKS), 57 to 61 (DTGGI), 120 to 123 (NKID), 183 to 190 (GKPNVGKS), 230 to 234 (DTAGV), and 295 to 298 (NKWD) contribute to the GTP site. Residues 353–437 (KQIKTGILND…GIKLEFRERK (85 aa)) enclose the KH-like domain.

The protein belongs to the TRAFAC class TrmE-Era-EngA-EngB-Septin-like GTPase superfamily. EngA (Der) GTPase family. In terms of assembly, associates with the 50S ribosomal subunit.

In terms of biological role, GTPase that plays an essential role in the late steps of ribosome biogenesis. This Clostridium kluyveri (strain NBRC 12016) protein is GTPase Der.